Consider the following 359-residue polypeptide: Large ribosomal subunit protein bL27m (359 aa).

A mitochondrion-targeting transit peptide spans 1–24 (MSFWKVATLWQMPLRPSILVQVRT). Positions 29–48 (AAGSRTSMKDSAGRRLGPKK) are disordered. The segment covering 35–48 (SMKDSAGRRLGPKK) has biased composition (basic and acidic residues).

Belongs to the bacterial ribosomal protein bL27 family.

It localises to the mitochondrion. In terms of biological role, component of the large subunit of mitochondrial ribosome. The chain is Large ribosomal subunit protein bL27m (MRPL2) from Eremothecium gossypii (strain ATCC 10895 / CBS 109.51 / FGSC 9923 / NRRL Y-1056) (Yeast).